A 99-amino-acid polypeptide reads, in one-letter code: Small ribosomal subunit protein uS14c (99 aa).

The segment at 46-66 (LQSSPRNSAPTRLHRRCSSTG) is disordered.

The protein belongs to the universal ribosomal protein uS14 family. In terms of assembly, part of the 30S ribosomal subunit.

The protein resides in the plastid. It is found in the chloroplast. Binds 16S rRNA, required for the assembly of 30S particles. The sequence is that of Small ribosomal subunit protein uS14c from Pinus thunbergii (Japanese black pine).